Reading from the N-terminus, the 235-residue chain is Phosphoribosylaminoimidazole-succinocarboxamide synthase (235 aa).

This sequence belongs to the SAICAR synthetase family.

The enzyme catalyses 5-amino-1-(5-phospho-D-ribosyl)imidazole-4-carboxylate + L-aspartate + ATP = (2S)-2-[5-amino-1-(5-phospho-beta-D-ribosyl)imidazole-4-carboxamido]succinate + ADP + phosphate + 2 H(+). Its pathway is purine metabolism; IMP biosynthesis via de novo pathway; 5-amino-1-(5-phospho-D-ribosyl)imidazole-4-carboxamide from 5-amino-1-(5-phospho-D-ribosyl)imidazole-4-carboxylate: step 1/2. The chain is Phosphoribosylaminoimidazole-succinocarboxamide synthase from Clostridium perfringens (strain SM101 / Type A).